Here is a 350-residue protein sequence, read N- to C-terminus: MKKTVAVLFGGESKEHEISLQSSISIINAIDKKKYNIILIGVEKNGKIGIRSINNYILFKYNINYIKLAPAVSYLYIIPGKNNYQFYSLKNKKMLKIDVIFSILHGSNGENGAFQGLFNTIYTPFVGSNVLSSSICMDKDISKRILSTFGISVVPSITLYYENYKKKINKIINNIKFPCCIKPSNQGSSFGVNVANDFISLKESIDVAFLYSKKILIEPFIQGREIEVGVLGNRNVISSVCGEIKFKKIFYDYKEKYISKKTKIIIPAKISNEISNKIKKIAKLAFISLECSIMARVDFFLTKNKKIFLNEINTIPGFTKNSIYPKLWSKSGLDFKSLINKLILLTIYKK.

Residues 143 to 344 (KRILSTFGIS…FKSLINKLIL (202 aa)) enclose the ATP-grasp domain. 172–227 (INNIKFPCCIKPSNQGSSFGVNVANDFISLKESIDVAFLYSKKILIEPFIQGREIE) lines the ATP pocket. 3 residues coordinate Mg(2+): Asp298, Glu311, and Asn313.

Belongs to the D-alanine--D-alanine ligase family. The cofactor is Mg(2+). It depends on Mn(2+) as a cofactor.

The protein localises to the cytoplasm. The enzyme catalyses 2 D-alanine + ATP = D-alanyl-D-alanine + ADP + phosphate + H(+). Its pathway is cell wall biogenesis; peptidoglycan biosynthesis. Functionally, cell wall formation. This Wigglesworthia glossinidia brevipalpis protein is D-alanine--D-alanine ligase.